A 570-amino-acid chain; its full sequence is Interleukin-1 receptor accessory protein (570 aa).

The signal sequence occupies residues 1-20 (MTLLWCVVSLYFYGILQSDA). 3 Ig-like C2-type domains span residues 21–128 (SERC…VAFP), 136–226 (SCFN…FHLT), and 242–350 (PPVI…VKQK). At 21 to 367 (SERCDDWGLD…VELACGFGAT (347 aa)) the chain is on the extracellular side. Intrachain disulfides connect Cys24–Cys122, Cys47–Cys114, Cys137–Cys181, Cys160–Cys212, and Cys266–Cys332. N-linked (GlcNAc...) asparagine glycosylation occurs at Asn57. The interval 69 to 85 (IWYWTRQDRDLEEPINF) is essential for interaction with PTPRD. 3 N-linked (GlcNAc...) asparagine glycosylation sites follow: Asn107, Asn111, and Asn118. N-linked (GlcNAc...) asparagine glycosylation is found at Asn196, Asn209, and Asn299. A helical membrane pass occupies residues 368–388 (VLLVVILIVVYHVYWLEMVLF). Residues 389–570 (YRAHFGTDET…GLSYSSLKNV (182 aa)) lie on the Cytoplasmic side of the membrane. Residues 403-546 (KEYDIYVSYA…RFWKQLQVAM (144 aa)) enclose the TIR domain. Glu482 is an active-site residue. Residues 549–570 (KKSPRRSSSDEQGLSYSSLKNV) form a disordered region. Ser557 is modified (phosphoserine). Positions 558–570 (DEQGLSYSSLKNV) are enriched in polar residues.

The protein belongs to the interleukin-1 receptor family. The interleukin-36 receptor complex is a heterodimer of IL1RL2 and IL1RAP; the association is inhibited by IL36RN. The interleukin-1 receptor complex is a heterodimer of IL1R1 and IL1RAP. Associates with IL1R2 to form a non-signaling interleukin-1 receptor complex. Interacts with IL-33-bound IL1RL1 to form the minimal interleukin-33 signaling complex with a 1:1:1 stoichiometry. Interacts with KIT (independently of stimulation with KITLG/SCF). A mast cell-specific KITLG/SCF-induced interleukin-33 signaling complex contains IL1RL1, IL1RAP, KIT and MYD88. Interacts (via the first immunoglobilin domain) with PTPRD (via the third immunoglobilin domain); induces pre- and postsynaptic differentiation of neurons.

Its subcellular location is the cell membrane. The protein resides in the secreted. The enzyme catalyses NAD(+) + H2O = ADP-D-ribose + nicotinamide + H(+). Coreceptor for IL1RL2 in the IL-36 signaling system. Coreceptor with IL1R1 in the IL-1 signaling system. Associates with IL1R1 bound to IL1B to form the high affinity interleukin-1 receptor complex which mediates interleukin-1-dependent activation of NF-kappa-B and other pathways. Signaling involves the recruitment of adapter molecules such as TOLLIP, MYD88, and IRAK1 or IRAK2 via the respective TIR domains of the receptor/coreceptor subunits. Recruits TOLLIP to the signaling complex. Does not bind to interleukin-1 alone; binding of IL1RN to IL1R1, prevents its association with IL1R1 to form a signaling complex. The cellular response is modulated through a non-signaling association with the membrane IL1R2 decoy receptor. Coreceptor for IL1RL1 in the IL-33 signaling system. Can bidirectionally induce pre- and postsynaptic differentiation of neurons by trans-synaptically binding to PTPRD. May play a role in IL1B-mediated costimulation of IFNG production from T-helper 1 (Th1) cells. Its function is as follows. Associates with secreted ligand-bound IL1R2 and increases the affinity of secreted IL1R2 for IL1B; this complex formation may be the dominant mechanism for neutralization of IL1B by secreted/soluble receptors. Enhances the ability of secreted IL1R1 to inhibit IL-33 signaling. The protein is Interleukin-1 receptor accessory protein (IL1RAP) of Macaca mulatta (Rhesus macaque).